The following is a 164-amino-acid chain: NADH-quinone oxidoreductase subunit I (164 aa).

4Fe-4S ferredoxin-type domains follow at residues 55–85 (LRRYPNGEERCIACKLCEAICPAQAITIDAE) and 95–124 (TRYDIDMTKCIYCGFCQEACPVDAIVEGPN). The [4Fe-4S] cluster site is built by Cys-65, Cys-68, Cys-71, Cys-75, Cys-104, Cys-107, Cys-110, and Cys-114.

It belongs to the complex I 23 kDa subunit family. As to quaternary structure, NDH-1 is composed of 14 different subunits. Subunits NuoA, H, J, K, L, M, N constitute the membrane sector of the complex. Requires [4Fe-4S] cluster as cofactor.

The protein resides in the cell inner membrane. It catalyses the reaction a quinone + NADH + 5 H(+)(in) = a quinol + NAD(+) + 4 H(+)(out). NDH-1 shuttles electrons from NADH, via FMN and iron-sulfur (Fe-S) centers, to quinones in the respiratory chain. The immediate electron acceptor for the enzyme in this species is believed to be ubiquinone. Couples the redox reaction to proton translocation (for every two electrons transferred, four hydrogen ions are translocated across the cytoplasmic membrane), and thus conserves the redox energy in a proton gradient. The protein is NADH-quinone oxidoreductase subunit I of Jannaschia sp. (strain CCS1).